The following is an 899-amino-acid chain: Protein argonaute (899 aa).

The interval 107 to 129 (TQKPKRRGGRAGGMRGNRGGPST) is disordered. Positions 116 to 125 (RAGGMRGNRG) are enriched in gly residues. The region spanning 229–313 (SMCELLNENR…KQDDYCNSVL (85 aa)) is the PAZ domain. Residues 555–878 (LVVVVIPGPK…LSKFCGEILG (324 aa)) enclose the Piwi domain.

This sequence belongs to the argonaute family. Ago subfamily. In terms of assembly, interacts with miR2. Highly specific binding to the mRNA m7G-cap. May be a component of the RNA-induced silencing complex (RISC), a sequence-specific, multicomponent nuclease that destroys or silences messenger RNAs homologous to the silencing trigger.

It localises to the cytoplasm. Plays an essential role in growth and, with Dicer, also involved in microRNA (miRNA)-mediated translational repression. The RNA interference pathway is implicated in antigenic variation having a role in regulation of variant-specific surface protein (VSP)-coding gene expression. Several VSP genes are transcribed but only transcripts encoding the VSP to be expressed accumulate. Antisense RNAs corresponding to the silenced VSP genes are detected. This chain is Protein argonaute, found in Giardia intestinalis (strain ATCC 50581 / GS clone H7) (Giardia lamblia).